Consider the following 351-residue polypeptide: Phenylalanine--tRNA ligase alpha subunit (351 aa).

The disordered stretch occupies residues 45-69 (LGDDAPIPAARRSLGSLPKDQRKDA). Residue E269 coordinates Mg(2+).

Belongs to the class-II aminoacyl-tRNA synthetase family. Phe-tRNA synthetase alpha subunit type 1 subfamily. As to quaternary structure, tetramer of two alpha and two beta subunits. Mg(2+) is required as a cofactor.

Its subcellular location is the cytoplasm. It catalyses the reaction tRNA(Phe) + L-phenylalanine + ATP = L-phenylalanyl-tRNA(Phe) + AMP + diphosphate + H(+). The polypeptide is Phenylalanine--tRNA ligase alpha subunit (Corynebacterium jeikeium (strain K411)).